The sequence spans 63 residues: Parvalbumin alpha (63 aa).

EF-hand domains lie at 28–38 (IEEEELGLILK) and 39–63 (VLLAAGDKDGDGKIGVDEFVTLVSE). Residues glutamate 29, glutamate 32, aspartate 45, aspartate 47, aspartate 49, lysine 51, and glutamate 56 each contribute to the Ca(2+) site.

As to expression, detected in muscle and cutaneous mucus. In the skin, detected in cells in the basal region of the glandular epithelium of the dermal mucus glands (at protein level).

It localises to the cytoplasm. The protein localises to the secreted. In muscle, parvalbumin is thought to be involved in relaxation after contraction. It binds two calcium ions. The polypeptide is Parvalbumin alpha (Rana temporaria (European common frog)).